The primary structure comprises 108 residues: Protein FMC1 homolog (108 aa).

The protein belongs to the FMC1 family.

The sequence is that of Protein FMC1 homolog from Caenorhabditis elegans.